The following is an 801-amino-acid chain: Phenylalanine--tRNA ligase beta subunit (801 aa).

In terms of domain architecture, tRNA-binding spans 39 to 148 (AGSFTGVKVG…EDAVIGTDFR (110 aa)). In terms of domain architecture, B5 spans 401-476 (PKPNKVALRR…RIYGYDNIPN (76 aa)). Mg(2+) contacts are provided by Asp454, Asp460, Glu463, and Glu464. The 94-residue stretch at 707–800 (SKFPSNRRDI…VSEKFGAALR (94 aa)) folds into the FDX-ACB domain.

Belongs to the phenylalanyl-tRNA synthetase beta subunit family. Type 1 subfamily. In terms of assembly, tetramer of two alpha and two beta subunits. It depends on Mg(2+) as a cofactor.

It is found in the cytoplasm. The catalysed reaction is tRNA(Phe) + L-phenylalanine + ATP = L-phenylalanyl-tRNA(Phe) + AMP + diphosphate + H(+). This is Phenylalanine--tRNA ligase beta subunit from Vibrio parahaemolyticus serotype O3:K6 (strain RIMD 2210633).